The following is a 481-amino-acid chain: MGQGVIGMSGRTLLDKIWERHVVRREPGKPDLLYIDLHLVHEVTSPQAFEGLRMAGRRVRRPDLTIATMDHNVPTTDRSLPLTDEIAARQMAALERNCSEFGVRLFDLYSPFQGIVHVIGPELGLTQPGLTIVCGDSHTATHGAFGALAFGIGTSEVEHVLATQCLWQHKPKVMEIRVNGKLPPGTTAKDLILGIIGQIGTDGATGYVIEYTGEAIRSLSMEGRMTVCNMSIEAGARAGMIAPDETTFAYLKGRPHAPQGELWEAAVADWRTLASDPDAVYDRVVEFDAGQLAPVVSWGTNPGQVVPVTGRIPDPRDFADPAQRKAAEAALAYMDLEPGTPIQDIRIDRVFIGSCTNGRIEDLRAAAAVVKGRKVAPGVRAMVVPGSGQVKAQAEAEGLDQIFREAGFEWREAGCSMCLGMNPDILAPGERCASTSNRNFEGRQGKGGRTHLVSPAMAAAAAIAGHFVDVRELLAEGGAAR.

[4Fe-4S] cluster-binding residues include cysteine 355, cysteine 415, and cysteine 418.

This sequence belongs to the aconitase/IPM isomerase family. LeuC type 1 subfamily. As to quaternary structure, heterodimer of LeuC and LeuD. [4Fe-4S] cluster serves as cofactor.

The catalysed reaction is (2R,3S)-3-isopropylmalate = (2S)-2-isopropylmalate. It functions in the pathway amino-acid biosynthesis; L-leucine biosynthesis; L-leucine from 3-methyl-2-oxobutanoate: step 2/4. In terms of biological role, catalyzes the isomerization between 2-isopropylmalate and 3-isopropylmalate, via the formation of 2-isopropylmaleate. In Symbiobacterium thermophilum (strain DSM 24528 / JCM 14929 / IAM 14863 / T), this protein is 3-isopropylmalate dehydratase large subunit.